The following is a 1212-amino-acid chain: DNA-directed RNA polymerase subunit beta' (1212 aa).

Cys60, Cys62, Cys75, and Cys78 together coordinate Zn(2+). Mg(2+) is bound by residues Asp450, Asp452, and Asp454. Zn(2+)-binding residues include Cys819, Cys893, Cys900, and Cys903.

Belongs to the RNA polymerase beta' chain family. In terms of assembly, the RNAP catalytic core consists of 2 alpha, 1 beta, 1 beta' and 1 omega subunit. When a sigma factor is associated with the core the holoenzyme is formed, which can initiate transcription. Mg(2+) is required as a cofactor. Zn(2+) serves as cofactor.

It catalyses the reaction RNA(n) + a ribonucleoside 5'-triphosphate = RNA(n+1) + diphosphate. DNA-dependent RNA polymerase catalyzes the transcription of DNA into RNA using the four ribonucleoside triphosphates as substrates. The protein is DNA-directed RNA polymerase subunit beta' of Streptococcus uberis (strain ATCC BAA-854 / 0140J).